Reading from the N-terminus, the 403-residue chain is Methylthioribose-1-phosphate isomerase (403 aa).

D277 acts as the Proton donor in catalysis.

This sequence belongs to the eIF-2B alpha/beta/delta subunits family. MtnA subfamily.

Its subcellular location is the cytoplasm. It localises to the nucleus. The enzyme catalyses 5-(methylsulfanyl)-alpha-D-ribose 1-phosphate = 5-(methylsulfanyl)-D-ribulose 1-phosphate. It participates in amino-acid biosynthesis; L-methionine biosynthesis via salvage pathway; L-methionine from S-methyl-5-thio-alpha-D-ribose 1-phosphate: step 1/6. In terms of biological role, catalyzes the interconversion of methylthioribose-1-phosphate (MTR-1-P) into methylthioribulose-1-phosphate (MTRu-1-P). This chain is Methylthioribose-1-phosphate isomerase, found in Lodderomyces elongisporus (strain ATCC 11503 / CBS 2605 / JCM 1781 / NBRC 1676 / NRRL YB-4239) (Yeast).